Reading from the N-terminus, the 102-residue chain is NADH-quinone oxidoreductase subunit K (102 aa).

The next 3 membrane-spanning stretches (helical) occupy residues 6 to 26 (LEHG…GLMV), 30 to 50 (ILFV…AFVV), and 62 to 82 (VMFI…LAIL).

This sequence belongs to the complex I subunit 4L family. In terms of assembly, NDH-1 is composed of 13 different subunits. Subunits NuoA, H, J, K, L, M, N constitute the membrane sector of the complex.

It is found in the cell inner membrane. It catalyses the reaction a quinone + NADH + 5 H(+)(in) = a quinol + NAD(+) + 4 H(+)(out). In terms of biological role, NDH-1 shuttles electrons from NADH, via FMN and iron-sulfur (Fe-S) centers, to quinones in the respiratory chain. The immediate electron acceptor for the enzyme in this species is believed to be ubiquinone. Couples the redox reaction to proton translocation (for every two electrons transferred, four hydrogen ions are translocated across the cytoplasmic membrane), and thus conserves the redox energy in a proton gradient. The sequence is that of NADH-quinone oxidoreductase subunit K from Pseudomonas syringae pv. syringae (strain B728a).